A 268-amino-acid polypeptide reads, in one-letter code: Indole-3-glycerol phosphate synthase 2 (268 aa).

This sequence belongs to the TrpC family.

It catalyses the reaction 1-(2-carboxyphenylamino)-1-deoxy-D-ribulose 5-phosphate + H(+) = (1S,2R)-1-C-(indol-3-yl)glycerol 3-phosphate + CO2 + H2O. It participates in amino-acid biosynthesis; L-tryptophan biosynthesis; L-tryptophan from chorismate: step 4/5. This chain is Indole-3-glycerol phosphate synthase 2 (trpC2), found in Ralstonia nicotianae (strain ATCC BAA-1114 / GMI1000) (Ralstonia solanacearum).